We begin with the raw amino-acid sequence, 695 residues long: Parasporal crystal protein Cry18Ca (695 aa).

Belongs to the delta endotoxin family.

Functionally, binds to the brush border membrane vesicles of scarab larvae and damages the gut wall somehow to allow the vegetative cells of P.popilliae to enter the hemolymph. The polypeptide is Parasporal crystal protein Cry18Ca (cry18Ca) (Paenibacillus popilliae (Bacillus popilliae)).